A 301-amino-acid polypeptide reads, in one-letter code: tRNA-cytidine(32) 2-sulfurtransferase (301 aa).

The PP-loop motif signature appears at 55-60 (SGGKDS). Positions 130, 133, and 221 each coordinate [4Fe-4S] cluster.

The protein belongs to the TtcA family. Homodimer. The cofactor is Mg(2+). [4Fe-4S] cluster is required as a cofactor.

Its subcellular location is the cytoplasm. It catalyses the reaction cytidine(32) in tRNA + S-sulfanyl-L-cysteinyl-[cysteine desulfurase] + AH2 + ATP = 2-thiocytidine(32) in tRNA + L-cysteinyl-[cysteine desulfurase] + A + AMP + diphosphate + H(+). It functions in the pathway tRNA modification. Functionally, catalyzes the ATP-dependent 2-thiolation of cytidine in position 32 of tRNA, to form 2-thiocytidine (s(2)C32). The sulfur atoms are provided by the cysteine/cysteine desulfurase (IscS) system. This is tRNA-cytidine(32) 2-sulfurtransferase from Acinetobacter baylyi (strain ATCC 33305 / BD413 / ADP1).